Reading from the N-terminus, the 532-residue chain is O-phosphoserine--tRNA(Cys) ligase (532 aa).

Substrate is bound by residues 186–188, 231–233, 273–274, and asparagine 317; these read HMT, SAS, and YY.

It belongs to the class-II aminoacyl-tRNA synthetase family. O-phosphoseryl-tRNA(Cys) synthetase subfamily. As to quaternary structure, homotetramer. Interacts with SepCysS.

The catalysed reaction is tRNA(Cys) + O-phospho-L-serine + ATP = O-phospho-L-seryl-tRNA(Cys) + AMP + diphosphate. Catalyzes the attachment of O-phosphoserine (Sep) to tRNA(Cys). This chain is O-phosphoserine--tRNA(Cys) ligase, found in Methanothermobacter thermautotrophicus (strain ATCC 29096 / DSM 1053 / JCM 10044 / NBRC 100330 / Delta H) (Methanobacterium thermoautotrophicum).